We begin with the raw amino-acid sequence, 156 residues long: Ribosomal RNA large subunit methyltransferase H (156 aa).

S-adenosyl-L-methionine contacts are provided by residues G104 and 123–128 (LSAMTL).

This sequence belongs to the RNA methyltransferase RlmH family. As to quaternary structure, homodimer.

It is found in the cytoplasm. It carries out the reaction pseudouridine(1915) in 23S rRNA + S-adenosyl-L-methionine = N(3)-methylpseudouridine(1915) in 23S rRNA + S-adenosyl-L-homocysteine + H(+). Specifically methylates the pseudouridine at position 1915 (m3Psi1915) in 23S rRNA. In Chromobacterium violaceum (strain ATCC 12472 / DSM 30191 / JCM 1249 / CCUG 213 / NBRC 12614 / NCIMB 9131 / NCTC 9757 / MK), this protein is Ribosomal RNA large subunit methyltransferase H.